The primary structure comprises 286 residues: Lipoyl synthase (286 aa).

Positions 34, 39, 45, 60, 64, 67, and 271 each coordinate [4Fe-4S] cluster. Residues 46-260 form the Radical SAM core domain; that stretch reads WESGTATFMI…EESAYSIGFS (215 aa).

The protein belongs to the radical SAM superfamily. Lipoyl synthase family. The cofactor is [4Fe-4S] cluster.

It is found in the cytoplasm. The catalysed reaction is [[Fe-S] cluster scaffold protein carrying a second [4Fe-4S](2+) cluster] + N(6)-octanoyl-L-lysyl-[protein] + 2 oxidized [2Fe-2S]-[ferredoxin] + 2 S-adenosyl-L-methionine + 4 H(+) = [[Fe-S] cluster scaffold protein] + N(6)-[(R)-dihydrolipoyl]-L-lysyl-[protein] + 4 Fe(3+) + 2 hydrogen sulfide + 2 5'-deoxyadenosine + 2 L-methionine + 2 reduced [2Fe-2S]-[ferredoxin]. The protein operates within protein modification; protein lipoylation via endogenous pathway; protein N(6)-(lipoyl)lysine from octanoyl-[acyl-carrier-protein]: step 2/2. Its function is as follows. Catalyzes the radical-mediated insertion of two sulfur atoms into the C-6 and C-8 positions of the octanoyl moiety bound to the lipoyl domains of lipoate-dependent enzymes, thereby converting the octanoylated domains into lipoylated derivatives. This is Lipoyl synthase from Picrophilus torridus (strain ATCC 700027 / DSM 9790 / JCM 10055 / NBRC 100828 / KAW 2/3).